The sequence spans 128 residues: Large ribosomal subunit protein uL22 (128 aa).

Belongs to the universal ribosomal protein uL22 family. As to quaternary structure, part of the 50S ribosomal subunit.

Its function is as follows. This protein binds specifically to 23S rRNA; its binding is stimulated by other ribosomal proteins, e.g. L4, L17, and L20. It is important during the early stages of 50S assembly. It makes multiple contacts with different domains of the 23S rRNA in the assembled 50S subunit and ribosome. The globular domain of the protein is located near the polypeptide exit tunnel on the outside of the subunit, while an extended beta-hairpin is found that lines the wall of the exit tunnel in the center of the 70S ribosome. This Nitrobacter winogradskyi (strain ATCC 25391 / DSM 10237 / CIP 104748 / NCIMB 11846 / Nb-255) protein is Large ribosomal subunit protein uL22.